A 197-amino-acid chain; its full sequence is Shikimate kinase (197 aa).

Glycine 26–arginine 31 lines the ATP pocket. Position 30 (serine 30) interacts with Mg(2+). Residues aspartate 48, arginine 72, and glycine 94 each contribute to the substrate site. Arginine 132 serves as a coordination point for ATP. Residue arginine 150 coordinates substrate.

Belongs to the shikimate kinase family. In terms of assembly, monomer. It depends on Mg(2+) as a cofactor.

Its subcellular location is the cytoplasm. It carries out the reaction shikimate + ATP = 3-phosphoshikimate + ADP + H(+). It participates in metabolic intermediate biosynthesis; chorismate biosynthesis; chorismate from D-erythrose 4-phosphate and phosphoenolpyruvate: step 5/7. In terms of biological role, catalyzes the specific phosphorylation of the 3-hydroxyl group of shikimic acid using ATP as a cosubstrate. This chain is Shikimate kinase, found in Prochlorococcus marinus (strain MIT 9211).